We begin with the raw amino-acid sequence, 453 residues long: Na(+)/H(+) antiporter NhaA (453 aa).

Transmembrane regions (helical) follow at residues 22-42 (ASLL…SPWA), 72-92 (MLAF…GLEI), 108-128 (LLPI…YMLV), 137-157 (GAAI…GLLG), 166-186 (IFLT…IALF), 189-209 (GHIA…LYVG), 218-238 (LFFY…GIHP), 316-336 (PLVN…VTFG), 343-363 (LVNV…LGIF), 386-406 (LFGV…IANL), and 424-444 (LGVF…LKWV).

Belongs to the NhaA Na(+)/H(+) (TC 2.A.33) antiporter family.

Its subcellular location is the cell inner membrane. It carries out the reaction Na(+)(in) + 2 H(+)(out) = Na(+)(out) + 2 H(+)(in). Na(+)/H(+) antiporter that extrudes sodium in exchange for external protons. The protein is Na(+)/H(+) antiporter NhaA of Parabacteroides distasonis (strain ATCC 8503 / DSM 20701 / CIP 104284 / JCM 5825 / NCTC 11152).